A 370-amino-acid chain; its full sequence is Aminomethyltransferase (370 aa).

Belongs to the GcvT family. As to quaternary structure, the glycine cleavage system is composed of four proteins: P, T, L and H.

It carries out the reaction N(6)-[(R)-S(8)-aminomethyldihydrolipoyl]-L-lysyl-[protein] + (6S)-5,6,7,8-tetrahydrofolate = N(6)-[(R)-dihydrolipoyl]-L-lysyl-[protein] + (6R)-5,10-methylene-5,6,7,8-tetrahydrofolate + NH4(+). Functionally, the glycine cleavage system catalyzes the degradation of glycine. This chain is Aminomethyltransferase, found in Clostridium botulinum (strain Loch Maree / Type A3).